We begin with the raw amino-acid sequence, 425 residues long: Serine--tRNA ligase (425 aa).

An L-serine-binding site is contributed by 235–237 (TAE). Residue 266–268 (RSE) coordinates ATP. Glu-289 serves as a coordination point for L-serine. 353–356 (EISS) lines the ATP pocket. An L-serine-binding site is contributed by Ser-389.

This sequence belongs to the class-II aminoacyl-tRNA synthetase family. Type-1 seryl-tRNA synthetase subfamily. Homodimer. The tRNA molecule binds across the dimer.

It localises to the cytoplasm. The enzyme catalyses tRNA(Ser) + L-serine + ATP = L-seryl-tRNA(Ser) + AMP + diphosphate + H(+). It carries out the reaction tRNA(Sec) + L-serine + ATP = L-seryl-tRNA(Sec) + AMP + diphosphate + H(+). Its pathway is aminoacyl-tRNA biosynthesis; selenocysteinyl-tRNA(Sec) biosynthesis; L-seryl-tRNA(Sec) from L-serine and tRNA(Sec): step 1/1. Functionally, catalyzes the attachment of serine to tRNA(Ser). Is also able to aminoacylate tRNA(Sec) with serine, to form the misacylated tRNA L-seryl-tRNA(Sec), which will be further converted into selenocysteinyl-tRNA(Sec). The sequence is that of Serine--tRNA ligase from Desulfotalea psychrophila (strain LSv54 / DSM 12343).